The sequence spans 416 residues: Tyrosine--tRNA ligase (416 aa).

Residues 55–64 (PTGSEIHLGH) carry the 'HIGH' region motif. Residues 249 to 253 (KMSKS) carry the 'KMSKS' region motif. Residue lysine 252 coordinates ATP. Positions 352-416 (TKAFHLLSSI…GKKTFRRISN (65 aa)) constitute an S4 RNA-binding domain.

It belongs to the class-I aminoacyl-tRNA synthetase family. TyrS type 2 subfamily. In terms of assembly, homodimer.

The protein resides in the cytoplasm. The enzyme catalyses tRNA(Tyr) + L-tyrosine + ATP = L-tyrosyl-tRNA(Tyr) + AMP + diphosphate + H(+). Catalyzes the attachment of tyrosine to tRNA(Tyr) in a two-step reaction: tyrosine is first activated by ATP to form Tyr-AMP and then transferred to the acceptor end of tRNA(Tyr). This chain is Tyrosine--tRNA ligase, found in Prochlorococcus marinus (strain SARG / CCMP1375 / SS120).